The chain runs to 307 residues: D-alanine--D-alanine ligase (307 aa).

The region spanning 101 to 301 (KTVMRAAGVS…FGELVRWMVE (201 aa)) is the ATP-grasp domain. 127-182 (PLTPPYVVKPIAEGSSMGVIIVREERSHPPQILASDEWVYGEEVLAETYIAGRELT) provides a ligand contact to ATP. Positions 251, 268, and 270 each coordinate Mg(2+).

It belongs to the D-alanine--D-alanine ligase family. The cofactor is Mg(2+). Mn(2+) serves as cofactor.

The protein resides in the cytoplasm. It catalyses the reaction 2 D-alanine + ATP = D-alanyl-D-alanine + ADP + phosphate + H(+). The protein operates within cell wall biogenesis; peptidoglycan biosynthesis. Its function is as follows. Cell wall formation. This Methylorubrum populi (strain ATCC BAA-705 / NCIMB 13946 / BJ001) (Methylobacterium populi) protein is D-alanine--D-alanine ligase.